The chain runs to 519 residues: Serine/threonine-protein kinase RIO3 (519 aa).

Serine 8 and serine 112 each carry phosphoserine. Tyrosine 122 carries the phosphotyrosine modification. A disordered region spans residues 122 to 159; the sequence is YEDSDSSEDEVDWQDTRDDPYRPAKPIPTPKKGFIGKG. The segment covering 124–134 has biased composition (acidic residues); it reads DSDSSEDEVDW. Serine 125, serine 127, and serine 128 each carry phosphoserine. The 269-residue stretch at 251–519 folds into the Protein kinase domain; that stretch reads ETITGCISTG…DGGPPILYDE (269 aa). ATP is bound by residues 257–265 and lysine 290; that span reads ISTGKESVV. Aspartate 406 serves as the catalytic Proton acceptor.

The protein belongs to the protein kinase superfamily. RIO-type Ser/Thr kinase family. Interacts with CASP10. Interacts with IRF3; RIOK3 probably mediates the interaction of TBK1 with IRF3. Associated with 40S pre-ribosomal particles. Mg(2+) is required as a cofactor. Post-translationally, autophosphorylated (in vitro).

The protein resides in the cytoplasm. The catalysed reaction is L-seryl-[protein] + ATP = O-phospho-L-seryl-[protein] + ADP + H(+). It catalyses the reaction L-threonyl-[protein] + ATP = O-phospho-L-threonyl-[protein] + ADP + H(+). Involved in regulation of type I interferon (IFN)-dependent immune response which plays a critical role in the innate immune response against DNA and RNA viruses. May act as an adapter protein essential for the recruitment of TBK1 to IRF3. Phosphorylates IFIH1 within the C-terminal region interfering with IFIH1 filament assembly on long dsRNA and resulting in attenuated IFIH1-signaling. Can inhibit CASP10 isoform 7-mediated activation of the NF-kappaB signaling pathway. May play a role in the biogenesis of the 40S ribosomal subunit. Involved in the processing of 21S pre-rRNA to the mature 18S rRNA. The sequence is that of Serine/threonine-protein kinase RIO3 (RIOK3) from Bos taurus (Bovine).